Here is an 87-residue protein sequence, read N- to C-terminus: Prohibitin 1 (87 aa).

The residue at position 8 (Thr8) is a Phosphothreonine. Lys62 bears the N6-acetyllysine mark. Position 83 is a phosphotyrosine (Tyr83).

Belongs to the prohibitin family. As to quaternary structure, the mitochondrial prohibitin complex consists of two subunits (PHB1 and PHB2), assembled into a membrane-associated ring-shaped supercomplex of approximately 1 mDa. Interacts with STOML2. Interacts with MAP1LC3B (membrane-bound form LC3-II); the interaction requires PHB2 and takes place upon Parkin-mediated mitochondrial damage. Interacts with STAT3 (unphosphorylated or phosphorylated at 'Ser-727'). Interacts with CLPB. Interacts with CD86 (via cytoplasmic domain); the interactions increases after priming with CD40.

The protein localises to the mitochondrion inner membrane. It is found in the nucleus. The protein resides in the cytoplasm. It localises to the cell membrane. Its function is as follows. Protein with pleiotropic attributes mediated in a cell-compartment- and tissue-specific manner, which include the plasma membrane-associated cell signaling functions, mitochondrial chaperone, and transcriptional co-regulator of transcription factors in the nucleus. Plays a role in adipose tissue and glucose homeostasis in a sex-specific manner. Contributes to pulmonary vascular remodeling by accelerating proliferation of pulmonary arterial smooth muscle cells. In terms of biological role, in the mitochondria, together with PHB2, forms large ring complexes (prohibitin complexes) in the inner mitochondrial membrane (IMM) and functions as a chaperone protein that stabilizes mitochondrial respiratory enzymes and maintains mitochondrial integrity in the IMM, which is required for mitochondrial morphogenesis, neuronal survival, and normal lifespan. The prohibitin complex, with DNAJC19, regulates cardiolipin remodeling and the protein turnover of OMA1 in a cardiolipin-binding manner. Regulates mitochondrial respiration activity playing a role in cellular aging. The prohibitin complex plays a role of mitophagy receptor involved in targeting mitochondria for autophagic degradation. Involved in mitochondrial-mediated antiviral innate immunity, activates RIG-I-mediated signal transduction and production of IFNB1 and proinflammatory cytokine IL6. Functionally, in the nucleus, acts as a transcription coregulator, enhances promoter binding by TP53, a transcription factor it activates, but reduces the promoter binding by E2F1, a transcription factor it represses. Interacts with STAT3 to affect IL17 secretion in T-helper Th17 cells. In the plasma membrane, cooperates with CD86 to mediate CD86-signaling in B lymphocytes that regulates the level of IgG1 produced through the activation of distal signaling intermediates. Upon CD40 engagement, required to activate NF-kappa-B signaling pathway via phospholipase C and protein kinase C activation. This Mesocricetus auratus (Golden hamster) protein is Prohibitin 1 (PHB1).